Consider the following 128-residue polypeptide: Glycine cleavage system H protein (128 aa).

The Lipoyl-binding domain maps to 24-106; the sequence is VYSVGITEHA…YTDGWLFSIK (83 aa). K65 carries the post-translational modification N6-lipoyllysine.

The protein belongs to the GcvH family. As to quaternary structure, the glycine cleavage system is composed of four proteins: P, T, L and H. The cofactor is (R)-lipoate.

The glycine cleavage system catalyzes the degradation of glycine. The H protein shuttles the methylamine group of glycine from the P protein to the T protein. In Yersinia enterocolitica serotype O:8 / biotype 1B (strain NCTC 13174 / 8081), this protein is Glycine cleavage system H protein.